The following is a 250-amino-acid chain: uncharacterized protein (250 aa).

A disordered region spans residues histidine 182–alanine 205. Over residues threonine 190 to proline 201 the composition is skewed to pro residues. The helical transmembrane segment at threonine 230–leucine 250 threads the bilayer.

This sequence belongs to the ascovirus HvAV ORF18 family.

The protein localises to the membrane. This is an uncharacterized protein from Spodoptera frugiperda ascovirus 1a (SfAV-1a).